The chain runs to 227 residues: uncharacterized protein (227 aa).

The next 7 membrane-spanning stretches (helical) occupy residues 25 to 45 (LLGF…NAGF), 49 to 69 (AAFG…YGMI), 80 to 100 (TGVT…GPVL), 111 to 131 (KIVG…SALA), 144 to 164 (FLTV…FLGI), 165 to 185 (PALA…MIMW), and 201 to 221 (AALT…NILL).

It is found in the cell membrane. This is an uncharacterized protein from Neisseria meningitidis serogroup B (strain ATCC BAA-335 / MC58).